The following is a 424-amino-acid chain: Hemagglutinin-esterase (424 aa).

Residues 1–16 (MFLLPRFVLVSCIIGS) form the signal peptide. The tract at residues 7–127 (FVLVSCIIGS…SNDIWMQNKG (121 aa)) is esterase domain 1. Topologically, residues 17 to 392 (LGFDNPPTNV…PICVYDPLPI (376 aa)) are virion surface. Residue S40 is the Nucleophile of the active site. C44 and C65 are joined by a disulfide. Residues N54, N89, N153, N236, and N301 are each glycosylated (N-linked (GlcNAc...) asparagine; by host). Intrachain disulfides connect C113–C162, C197–C276, and C205–C249. The receptor binding stretch occupies residues 128–266 (LFYTQVYKNM…GNYLAISNEL (139 aa)). Positions 267–379 (LLTVPTKAIC…RCPTAADINT (113 aa)) are esterase domain 2. Residues C307 and C312 are joined by a disulfide bond. N316 carries N-linked (GlcNAc...) asparagine; by host glycosylation. Active-site charge relay system residues include D326 and H329. The cysteines at positions 347 and 371 are disulfide-linked. N-linked (GlcNAc...) asparagine; by host glycosylation occurs at N358. A helical transmembrane segment spans residues 393–413 (ILLGILLGVAVIIIVVLLLYF). Topologically, residues 414–424 (MVDNGTRLHDA) are intravirion. N417 is a glycosylation site (N-linked (GlcNAc...) asparagine; by host).

Belongs to the influenza type C/coronaviruses hemagglutinin-esterase family. As to quaternary structure, homodimer; disulfide-linked. Forms a complex with the M protein in the pre-Golgi. Associates then with S-M complex to form a ternary complex S-M-HE. In terms of processing, N-glycosylated in the RER. Post-translationally, N-glycosylated in the host RER.

The protein localises to the virion membrane. It localises to the host cell membrane. It carries out the reaction N-acetyl-9-O-acetylneuraminate + H2O = N-acetylneuraminate + acetate + H(+). The enzyme catalyses N-acetyl-4-O-acetylneuraminate + H2O = N-acetylneuraminate + acetate + H(+). Its function is as follows. Structural protein that makes short spikes at the surface of the virus. Contains receptor binding and receptor-destroying activities. Mediates de-O-acetylation of N-acetyl-4-O-acetylneuraminic acid, which is probably the receptor determinant recognized by the virus on the surface of erythrocytes and susceptible cells. This receptor-destroying activity is important for virus release as it probably helps preventing self-aggregation and ensures the efficient spread of the progeny virus from cell to cell. May serve as a secondary viral attachment protein for initiating infection, the spike protein being the major one. May become a target for both the humoral and the cellular branches of the immune system. This is Hemagglutinin-esterase from Bovine coronavirus (strain 98TXSF-110-ENT) (BCoV-ENT).